The primary structure comprises 310 residues: Cysteine synthase (310 aa).

K44 carries the post-translational modification N6-(pyridoxal phosphate)lysine. Residues N74, 179–183 (GTGGT), and S267 each bind pyridoxal 5'-phosphate.

The protein belongs to the cysteine synthase/cystathionine beta-synthase family. Requires pyridoxal 5'-phosphate as cofactor.

The catalysed reaction is O-acetyl-L-serine + hydrogen sulfide = L-cysteine + acetate. Its pathway is amino-acid biosynthesis; L-cysteine biosynthesis; L-cysteine from L-serine: step 2/2. The polypeptide is Cysteine synthase (cysK) (Neisseria meningitidis serogroup B (strain ATCC BAA-335 / MC58)).